The following is a 154-amino-acid chain: MAARLCCQLDPARDVLCLRPVGAESRGRPFPGPLGALPPASPPVVPTDHGAHLSLRGLPVCAFSSAGPCALRFTSARRMETTVNAHGNLPKVLHKRTLGLSAMSTTDLEAYFKDCVFNEWEELGEEVRLKVFVLGGCRHKLVCSPAPCNFFTSA.

The tract at residues 68-117 is mitochondrial targeting sequence; the sequence is PCALRFTSARRMETTVNAHGNLPKVLHKRTLGLSAMSTTDLEAYFKDCVF.

The protein belongs to the orthohepadnavirus protein X family. In terms of assembly, may form homodimer. May interact with host CEBPA, CFLAR, CREB1, DDB1, E4F1, HBXIP, HSPD1/HSP60, NFKBIA, POLR2E and SMAD4. Interacts with host SMC5-SMC6 complex and induces its degradation. Interacts with host TRPC4AP; leading to prevent ubiquitination of TRPC4AP. Interacts with host PLSCR1; this interaction promotes ubiquitination and degradation of HBx and impairs HBx-mediated cell proliferation. Post-translationally, a fraction may be phosphorylated in insect cells and HepG2 cells, a human hepatoblastoma cell line. Phosphorylated in vitro by host protein kinase C or mitogen-activated protein kinase. N-acetylated in insect cells.

It is found in the host cytoplasm. The protein resides in the host nucleus. The protein localises to the host mitochondrion. Multifunctional protein that plays a role in silencing host antiviral defenses and promoting viral transcription. Does not seem to be essential for HBV infection. May be directly involved in development of cirrhosis and liver cancer (hepatocellular carcinoma). Most of cytosolic activities involve modulation of cytosolic calcium. The effect on apoptosis is controversial depending on the cell types in which the studies have been conducted. May induce apoptosis by localizing in mitochondria and causing loss of mitochondrial membrane potential. May also modulate apoptosis by binding host CFLAR, a key regulator of the death-inducing signaling complex (DISC). Promotes viral transcription by using the host E3 ubiquitin ligase DDB1 to target the SMC5-SMC6 complex to proteasomal degradation. This host complex would otherwise bind to viral episomal DNA, and prevents its transcription. Moderately stimulates transcription of many different viral and cellular transcription elements. Promoters and enhancers stimulated by HBx contain DNA binding sites for NF-kappa-B, AP-1, AP-2, c-EBP, ATF/CREB, or the calcium-activated factor NF-AT. In Hepatitis B virus genotype B/C subtype adw (isolate Okinawa/pODW282/1998) (HBV-B), this protein is Protein X.